A 544-amino-acid polypeptide reads, in one-letter code: MMMPRLVPRWPAWLFCWRAACIQGASVRQKMWAGPSKIPGLGGPRGAWGTSPLVPRGSCSASSRTPEVTLTPERYPVQRLPFSVVSEDDLAALERVVPGRVITDPEELEPPNVDWLRTVRGSSKVLLRPRTTQEVAHILRYCHERNLAVNPQGGNTGMVGGSTPVFDEIILSTALMNQVLSFHDVSGVLVCQAGCVLEALSQYVEERGFIMPLDLGAKGSCHIGGNVATNAGGLRVLRYGSLRGTVLGLEVVLADGTVLNCLTSLRKDNTGYDLKQLFIGSEGTLGVITAVSILCPPKPSTVNVAFLGCPGFAEVLQTFRTCRAMLGEILSAFEFMDAECMKLVRLHLGLSCPVQESPFYVLIETAGSGPGHDAEKLGCFLEQVLDSGLVTDGTLGSDERRIKMLWALRERITEALSRDGYVYKYDLSLPLDRLYDLVGDLRARLGPSAKHVVGYGHLGDGNLHLNVTSEAFSTSLLGALEPYVYEWTAGQRGSVSAEHGLGFKKKDVLGYSKPPEALQLMRQLKALLDPKGILNPYKMLPTHA.

Residues 1-10 constitute a mitochondrion transit peptide; the sequence is MMMPRLVPRW. The FAD-binding PCMH-type domain maps to 119-298; it reads VRGSSKVLLR…TAVSILCPPK (180 aa). At lysine 124 the chain carries N6-succinyllysine. 3 residues coordinate (R)-2-hydroxyglutarate: arginine 409, threonine 413, and lysine 424. Arginine 409 contributes to the (R)-lactate binding site. The (R)-malate site is built by arginine 409, threonine 413, and lysine 424. Residues histidine 457 and histidine 464 each contribute to the Zn(2+) site. Asparagine 466 contacts (R)-2-hydroxyglutarate. Glutamate 498 contributes to the Zn(2+) binding site. Histidine 499 contacts (R)-2-hydroxyglutarate. Position 499 (histidine 499) interacts with (R)-lactate. Histidine 499 contacts (R)-malate.

The protein belongs to the FAD-binding oxidoreductase/transferase type 4 family. Requires FAD as cofactor.

It is found in the mitochondrion. The catalysed reaction is (R)-2-hydroxyglutarate + A = 2-oxoglutarate + AH2. It carries out the reaction (R)-malate + A = oxaloacetate + AH2. Its activity is regulated as follows. Activated by zinc and cobalt ions. Its function is as follows. Catalyzes the oxidation of D-2-hydroxyglutarate (D-2-HG) to alpha-ketoglutarate. Also catalyzes the oxidation of other D-2-hydroxyacids, such as D-malate (D-MAL) and D-lactate (D-LAC). Exhibits high activities towards D-2-HG and D-MAL but a very weak activity towards D-LAC. This is D-2-hydroxyglutarate dehydrogenase, mitochondrial (D2HGDH) from Bos taurus (Bovine).